We begin with the raw amino-acid sequence, 314 residues long: tRNA dimethylallyltransferase (314 aa).

10–17 provides a ligand contact to ATP; that stretch reads GPTAVGKT. Residue 12–17 participates in substrate binding; sequence TAVGKT. Residues 35-38 form an interaction with substrate tRNA region; the sequence is DSMQ.

The protein belongs to the IPP transferase family. As to quaternary structure, monomer. The cofactor is Mg(2+).

It catalyses the reaction adenosine(37) in tRNA + dimethylallyl diphosphate = N(6)-dimethylallyladenosine(37) in tRNA + diphosphate. Functionally, catalyzes the transfer of a dimethylallyl group onto the adenine at position 37 in tRNAs that read codons beginning with uridine, leading to the formation of N6-(dimethylallyl)adenosine (i(6)A). This Clostridium novyi (strain NT) protein is tRNA dimethylallyltransferase.